A 265-amino-acid chain; its full sequence is Short-chain dehydrogenase/reductase phqE (265 aa).

10 residues coordinate NADP(+): T23, S24, I26, S46, N47, K50, D76, R131, V203, and T205. The chain crosses the membrane as a helical span at residues 25 to 45 (GIGFAVCAAALGHGAIVTIVG).

Belongs to the short-chain dehydrogenases/reductases (SDR) family. Requires NADP(+) as cofactor.

The protein localises to the membrane. The protein operates within alkaloid biosynthesis. Short-chain dehydrogenase/reductase; part of the gene cluster that mediates the biosynthesis of paraherquamide, a fungal indole alkaloid that belongs to a family of natural products containing a characteristic bicyclo[2.2.2]diazaoctane core. The first steps in the biosynthesis of paraherquamide is the production of the beta-methyl-proline precursor from L-isoleucine. They require oxidation of a terminally hydroxylated L-isoleucine to the corresponding aldehyde by enzymes which have still to be identified. Spontaneous cyclization and dehydration would yield the 4-methyl pyrolline-5-carboxylic acid, which is then reduced by the pyrroline-5-carboxylate reductase phqD leading to the beta-methyl-proline precursor. The next step of paraherquamide biosynthesis involves coupling of beta-methyl-proline and L-tryptophan by the bimodular NRPS phqB, to produce a monooxopiperazine intermediate. The reductase (R) domain of phqB utilizes NADPH for hydride transfer to reduce the thioester bond of the T domain-tethered linear dipeptide to a hemithioaminal intermediate, which spontaneously cleaves the C-S bond to release the aldehyde product. This compound undergoes spontaneous cyclization and dehydration to give a dienamine which is reverse prenylated at C-2 by the reverse prenyltransferase phqJ. The other prenyltransferase present in the cluster, phqI may be a redundant gene in the pathway. During biosynthetic assembly, the key step to produce the polycyclic core is catalyzed by the bifunctional reductase and intramolecular [4+2] Diels-Alderase, phqE, resulting in formation of the [2.2.2] diazaoctane intermediate preparaherquamide. Following formation of preparaherquamide, an indole 2,3-epoxidation-initiated pinacol-like rearrangement is catalyzed by the phqK FAD-dependent monooxygenase. The prenyltransferase phqA, the cytochrome P450 monooxygenase phqL, and the FAD-linked oxidoreductase phqH (or the cytochrome P450 monooxygenase phqM), are proposed to be involved in the formation of the pyran ring. The FAD-dependent monooxygenase phqK is likely responsible for generation of the spiro-oxindole, and the N-methylation is likely mediated by the phqN methyltransferase leading to the isolable natural product paraherquamide F. However, the order of these biosynthetic steps has still to be determined. In late-stage paraherquamide biosynthesis, the third P450 monooxygenase, phqO, is probably responsible for the C-14 hydroxylation, transforming paraherquamide F to paraherquamide G, and paraherquamide E to the final product paraherquamide A. The expansion from the 6-membered ring pyran (in paraherquamides F and G) to the 7-membered dioxepin ring (in paraherquamides A and E) represents a poorly understood but intriguing process that probably involves the 2-oxoglutarate-dependent dioxygenase phqC. Finally, the remaining members of the paraherquamide cluster, including phqI as well as phqM (or phqH), do not have a clearly prescribed role and appear to be redundant. The chain is Short-chain dehydrogenase/reductase phqE from Penicillium fellutanum.